Here is a 298-residue protein sequence, read N- to C-terminus: Tyrosine recombinase XerC (298 aa).

The Core-binding (CB) domain occupies 2–88 (TDLHTDVERY…ALRSFFDWLV (87 aa)). The Tyr recombinase domain maps to 109–288 (HLPKNIDVDD…DFQHLASVYD (180 aa)). Active-site residues include Arg148, Lys172, His240, Arg243, and His266. The O-(3'-phospho-DNA)-tyrosine intermediate role is filled by Tyr275.

Belongs to the 'phage' integrase family. XerC subfamily. In terms of assembly, forms a cyclic heterotetrameric complex composed of two molecules of XerC and two molecules of XerD, in which XerC interacts with XerD via its C-terminal region, XerD interacts with XerC via its C-terminal region and so on.

It is found in the cytoplasm. Its activity is regulated as follows. FtsK may regulate the catalytic switch between XerC and XerD in the heterotetrameric complex during the two steps of the recombination process. Functionally, site-specific tyrosine recombinase, which acts by catalyzing the cutting and rejoining of the recombining DNA molecules. Binds cooperatively to specific DNA consensus sequences that are separated from XerD binding sites by a short central region, forming the heterotetrameric XerC-XerD complex that recombines DNA substrates. The complex is essential to convert dimers of the bacterial chromosome into monomers to permit their segregation at cell division. It also contributes to the segregational stability of plasmids. In the complex XerC specifically exchanges the top DNA strands. The sequence is that of Tyrosine recombinase XerC from Escherichia coli O127:H6 (strain E2348/69 / EPEC).